The primary structure comprises 501 residues: Sodium-coupled neutral amino acid symporter 2 (501 aa).

A disordered region spans residues 1–26 (MSSAEMGKFDISPDEDSSSYSSNSND). Residues 1-77 (MSSAEMGKFD…HPGTTSFGMS (77 aa)) lie on the Cytoplasmic side of the membrane. The regulates protein turnover upon amino acid deprivation stretch occupies residues 1 to 97 (MSSAEMGKFD…SGILGLSYAM (97 aa)). Residues 78-97 (VFNLSNAIVGSGILGLSYAM) traverse the membrane as a helical segment. Asn-83 serves as a coordination point for Na(+). Over 98–103 (ANTGIA) the chain is Extracellular. Residues 104-124 (LFVILLLVVSILSLYSVHLLL) form a helical membrane-spanning segment. The Cytoplasmic portion of the chain corresponds to 125-159 (KTANEGGSLLYEQLGMKAFGMPGKLAASGSITMQN). The helical transmembrane segment at 160 to 178 (IGAMSSYLFIVKYELPLVI) threads the bilayer. The Extracellular segment spans residues 179–189 (KTFMNIEENAG). A helical membrane pass occupies residues 190 to 210 (HWYLNGDYLVLLVSVILILPL). The Cytoplasmic portion of the chain corresponds to 211 to 218 (SLLKNLGY). The helical transmembrane segment at 219-239 (LGYTSGFSLLCMVFFLIVVIW) threads the bilayer. Residues 240-287 (KMFQIPCPMESDIINATLINATLAPFADENITISDACKPEYFIFNSQT) lie on the Extracellular side of the membrane. Cys-246 and Cys-276 are oxidised to a cystine. 2 N-linked (GlcNAc...) asparagine glycosylation sites follow: Asn-254 and Asn-259. Residues 288–308 (VYAVPILTFSFVCHPAILPIY) traverse the membrane as a helical segment. Residues 309–324 (EELKSRSRKRMMNVSY) lie on the Cytoplasmic side of the membrane. Residues 325-345 (VSFFAMFLMYLLAALFGYLTF) form a helical membrane-spanning segment. The Extracellular portion of the chain corresponds to 346-366 (YGRVESELLHTYSAFLGADIL). Residues 367–387 (LLIVRLAVLMAVTLTVPVVIF) form a helical membrane-spanning segment. Thr-381 is a Na(+) binding site. The Cytoplasmic portion of the chain corresponds to 388-408 (PIRSSVTQLLWAGKEFSWWRH). A helical transmembrane segment spans residues 409-429 (CSITVVLLAFTNVLVIFVPTI). Residues 430-431 (RD) lie on the Extracellular side of the membrane. A helical transmembrane segment spans residues 432 to 452 (IFGFIGASAAAMLIFILPSAF). Topologically, residues 453-467 (YIKLVKKEPMKSVQK) are cytoplasmic. Residues 468–490 (IGAALFFLSGILVMTGCMTLIIL) form a helical membrane-spanning segment. Topologically, residues 491-501 (DWIHTDASDGH) are extracellular.

This sequence belongs to the amino acid/polyamine transporter 2 family.

The protein resides in the cell membrane. The catalysed reaction is L-alanine(in) + Na(+)(in) = L-alanine(out) + Na(+)(out). The enzyme catalyses glycine(in) + Na(+)(in) = glycine(out) + Na(+)(out). It carries out the reaction L-serine(in) + Na(+)(in) = L-serine(out) + Na(+)(out). It catalyses the reaction L-proline(in) + Na(+)(in) = L-proline(out) + Na(+)(out). The catalysed reaction is L-methionine(in) + Na(+)(in) = L-methionine(out) + Na(+)(out). The enzyme catalyses L-histidine(in) + Na(+)(in) = L-histidine(out) + Na(+)(out). It carries out the reaction L-asparagine(in) + Na(+)(in) = L-asparagine(out) + Na(+)(out). It catalyses the reaction L-glutamine(in) + Na(+)(in) = L-glutamine(out) + Na(+)(out). The catalysed reaction is L-threonine(in) + Na(+)(in) = L-threonine(out) + Na(+)(out). The enzyme catalyses L-leucine(in) + Na(+)(in) = L-leucine(out) + Na(+)(out). It carries out the reaction L-phenylalanine(in) + Na(+)(in) = L-phenylalanine(out) + Na(+)(out). Its activity is regulated as follows. Inhibited by N-methyl-D-glucamine. Inhibited by choline. Allosteric regulation of sodium ions binding by pH. Symporter that cotransports neutral amino acids and sodium ions from the extracellular to the intracellular side of the cell membrane. The transport is pH-sensitive, Li(+)-intolerant, electrogenic, driven by the Na(+) electrochemical gradient and cotransports of neutral amino acids and sodium ions with a stoichiometry of 1:1. This chain is Sodium-coupled neutral amino acid symporter 2, found in Gallus gallus (Chicken).